Consider the following 377-residue polypeptide: Succinyl-diaminopimelate desuccinylase (377 aa).

Position 68 (His-68) interacts with Zn(2+). Asp-70 is a catalytic residue. Asp-101 is a Zn(2+) binding site. Catalysis depends on Glu-135, which acts as the Proton acceptor. Zn(2+) is bound by residues Glu-136, Glu-164, and His-350.

This sequence belongs to the peptidase M20A family. DapE subfamily. As to quaternary structure, homodimer. The cofactor is Zn(2+). Co(2+) serves as cofactor.

The catalysed reaction is N-succinyl-(2S,6S)-2,6-diaminopimelate + H2O = (2S,6S)-2,6-diaminopimelate + succinate. It participates in amino-acid biosynthesis; L-lysine biosynthesis via DAP pathway; LL-2,6-diaminopimelate from (S)-tetrahydrodipicolinate (succinylase route): step 3/3. Catalyzes the hydrolysis of N-succinyl-L,L-diaminopimelic acid (SDAP), forming succinate and LL-2,6-diaminopimelate (DAP), an intermediate involved in the bacterial biosynthesis of lysine and meso-diaminopimelic acid, an essential component of bacterial cell walls. This Vibrio cholerae serotype O1 (strain ATCC 39541 / Classical Ogawa 395 / O395) protein is Succinyl-diaminopimelate desuccinylase.